The sequence spans 450 residues: Glucose-6-phosphate isomerase (450 aa).

E290 serves as the catalytic Proton donor. Residues H311 and K425 contribute to the active site.

It belongs to the GPI family.

It is found in the cytoplasm. The enzyme catalyses alpha-D-glucose 6-phosphate = beta-D-fructose 6-phosphate. It functions in the pathway carbohydrate biosynthesis; gluconeogenesis. The protein operates within carbohydrate degradation; glycolysis; D-glyceraldehyde 3-phosphate and glycerone phosphate from D-glucose: step 2/4. In terms of biological role, catalyzes the reversible isomerization of glucose-6-phosphate to fructose-6-phosphate. In Alkaliphilus metalliredigens (strain QYMF), this protein is Glucose-6-phosphate isomerase.